Here is a 342-residue protein sequence, read N- to C-terminus: Arginase 1, mitochondrial (342 aa).

The N-terminal 22 residues, 1–22, are a transit peptide targeting the mitochondrion; sequence MSRIIGRKGINYIHRLNSASFT. L-ornithine-binding positions include Ser-77 and 96–99; that span reads GSTN. His-161, Asp-185, His-187, and Asp-189 together coordinate Mn(2+). Residue 189 to 191 participates in L-ornithine binding; sequence DIY. A substrate-binding site is contributed by 195 to 197; that stretch reads EGN. Position 224 (Ser-224) interacts with L-ornithine. Residues Asp-270 and Asp-272 each contribute to the Mn(2+) site. Glu-313 is a substrate binding site.

Belongs to the arginase family. In terms of assembly, forms homohexamers. The cofactor is Mn(2+). Expressed in vasculature of roots, root tips, cotyledons, leaves, cauline leaves, stems, sepals and pollen.

The protein resides in the mitochondrion. The catalysed reaction is L-arginine + H2O = urea + L-ornithine. It catalyses the reaction agmatine + H2O = urea + putrescine. It functions in the pathway nitrogen metabolism; urea cycle; L-ornithine and urea from L-arginine: step 1/1. It participates in amine and polyamine biosynthesis; putrescine biosynthesis via agmatine pathway; putrescine from agmatine: step 1/1. Functionally, catalyzes the hydrolysis of L-arginine to urea and L-ornithine. The latter can be utilized in the urea cycle or as a precursor for the synthesis of both polyamines and proline. Possesses agmatinase activity. Catalyzes the formation of putrescine from agmatine. In Arabidopsis thaliana (Mouse-ear cress), this protein is Arginase 1, mitochondrial.